A 727-amino-acid polypeptide reads, in one-letter code: Testis anion transporter 1 (727 aa).

Residues 1-23 (MLTIFPFLEWMCMYRLKDWLLGD) lie on the Cytoplasmic side of the membrane. Residues 24 to 44 (LLAGISVGLVQVPQGLTLSLL) traverse the membrane as a helical segment. At 45–47 (ARQ) the chain is on the extracellular side. The helical transmembrane segment at 48–68 (LIPPLNIAYAAFCSSVIYVIF) threads the bilayer. The Cytoplasmic portion of the chain corresponds to 69 to 74 (GSCHQM). A helical membrane pass occupies residues 75–95 (SIGSFFLVSALLINVLKISPL). The Extracellular segment spans residues 96 to 130 (NNGHLVMGSFLKDEFSAPSYLMGYNKSLSVVATTT). N-linked (GlcNAc...) asparagine glycosylation is present at asparagine 120. A helical membrane pass occupies residues 131–151 (FLTGIIQLIMGVLGLGFIATY). Topologically, residues 152-160 (LPESAMSAY) are cytoplasmic. A helical transmembrane segment spans residues 161–181 (LAAVALHIMLSQLTCIFGIMI). The Extracellular portion of the chain corresponds to 182 to 198 (SFHAGPISFFYDIINYC). Residues 199–219 (VALPKANSTSILLFLTVVVAL) traverse the membrane as a helical segment. Residues 220–235 (RINKCIRISFNQYPIE) lie on the Cytoplasmic side of the membrane. The helical transmembrane segment at 236 to 256 (FPMELFLIIGFTVIGNKITMA) threads the bilayer. Topologically, residues 257 to 283 (TETSQTLIDMIPYSFLFPVTPDFSVLP) are extracellular. The helical transmembrane segment at 284 to 304 (KIILQAISLSLVSSFLLVFLG) threads the bilayer. The Cytoplasmic segment spans residues 305-360 (KKIASLHNYSVNSNQDLIAIGLCNVVSSFFRSCVFTGAVARTIIQDKSGGRQQFAS). A helical membrane pass occupies residues 361-381 (LVGAGVMLLLMVKMGHFFYAL). Topologically, residues 382 to 383 (PN) are extracellular. The helical transmembrane segment at 384–404 (AVLAGIILSNVVPYLETISNL) threads the bilayer. Topologically, residues 405 to 424 (PSLWRQDQYDCALWMMTFSS) are cytoplasmic. Residues 425–445 (SIFLGLDIGLIISVVSAFFIT) form a helical membrane-spanning segment. At 446 to 727 (SVRSHRAKIL…LPSFHLQHIF (282 aa)) the chain is on the extracellular side. The region spanning 471–722 (DYREIITIPG…NSLSRLPSFH (252 aa)) is the STAS domain. The tract at residues 592-727 (TVSSMSQKNQ…LPSFHLQHIF (136 aa)) is interaction with RACGAP1.

This sequence belongs to the SLC26A/SulP transporter (TC 2.A.53) family. Interacts with RACGAP1. Interacts with CFTR; stimulates anion transport activity of CFTR. In terms of processing, N-glycosylated.

The protein resides in the membrane. It carries out the reaction sulfate(out) + chloride(in) = sulfate(in) + chloride(out). The catalysed reaction is oxalate(in) + chloride(out) = oxalate(out) + chloride(in). Functionally, antiporter that mediates the exchange of sulfate and oxalate against chloride ions across a membrane. Stimulates anion transport activity of CFTR. May cooperate with CFTR in the regulation of chloride and bicarbonate ions fluxes required for activation of the ADCY10/PKA pathway during sperm motility and sperm capacitation. May play a role in sperm tail differentiation and motility and hence male fertility. In Macaca fascicularis (Crab-eating macaque), this protein is Testis anion transporter 1.